The following is a 697-amino-acid chain: MSQNERDSLELERKNTPPDGPRLPERRPRFSVWIYLAIFLALLVHFFLFWTGTDTSTIEYSQFLEYVEKGYVERVEIVNDTKVQGRFTEAAVREGLVSVPVRQTDLLRGAQTPELIRRFTTTKPADHDLTSFLLAYNERARAEGRPTVQFTARIEENWFGGLLTWIFPLILIVALWVFLLRRMSPSSQVLNIGKNRAILYDAMGDHRVTFKDVAGLDEAKEEVAEIVEFLKNPKKFTRLGGKLPKGVLLVGPPGTGKTLLAKAVAGEAGVPFFSISGSDFVEMFVGVGAARVRDLFRQAKEKAPCIIFIDEIDAIGRSRGRGIMMGANDERENTLNQLLVEMDGFNTDKGVIIMAATNRPDVLDPALLRPGRFDRQILIDKPDRRERLEIFKVHTRDLILGDDVDLEVLAGQTPGFAGAEIANVCNEAALLAARKGKEAVEMEDFEQAIDRVIAGLEKKNKIISPEEREIVAYHEAGHAIVGWFLRYTDPVVKVSIVPRGLAALGYAQYLPEERYLYTKEALLDRMTMAIGGRVAEELVFGRISTGAQNDLERITRMAYAMVVDYGMSERVGYVSFNLSGQYGEQAFFDKPYSEETARLIDEEVRRIINEVRERARRILEEKRDKLEALARRLLEKEVLGPRDLVEILGPRPYGDYPSPNGKDVEELKDLQKGEPTSSSAVEAPAPQTERPESSSAP.

The disordered stretch occupies residues 1–23; that stretch reads MSQNERDSLELERKNTPPDGPRL. The Cytoplasmic portion of the chain corresponds to 1 to 29; that stretch reads MSQNERDSLELERKNTPPDGPRLPERRPR. Residues 30–50 traverse the membrane as a helical segment; the sequence is FSVWIYLAIFLALLVHFFLFW. Residues 51–158 are Periplasmic-facing; sequence TGTDTSTIEY…QFTARIEENW (108 aa). Residues 159 to 179 form a helical membrane-spanning segment; the sequence is FGGLLTWIFPLILIVALWVFL. Residues 180–697 lie on the Cytoplasmic side of the membrane; that stretch reads LRRMSPSSQV…TERPESSSAP (518 aa). 251–258 lines the ATP pocket; it reads GPPGTGKT. Histidine 474 is a binding site for Zn(2+). Glutamate 475 is an active-site residue. 2 residues coordinate Zn(2+): histidine 478 and aspartate 550. The interval 649 to 697 is disordered; it reads GPRPYGDYPSPNGKDVEELKDLQKGEPTSSSAVEAPAPQTERPESSSAP. The span at 662–672 shows a compositional bias: basic and acidic residues; sequence KDVEELKDLQK.

In the central section; belongs to the AAA ATPase family. This sequence in the C-terminal section; belongs to the peptidase M41 family. Homohexamer. Zn(2+) is required as a cofactor.

It localises to the cell inner membrane. Functionally, acts as a processive, ATP-dependent zinc metallopeptidase for both cytoplasmic and membrane proteins. Plays a role in the quality control of integral membrane proteins. This Rhodothermus marinus (strain ATCC 43812 / DSM 4252 / R-10) (Rhodothermus obamensis) protein is ATP-dependent zinc metalloprotease FtsH.